The sequence spans 212 residues: Guanylate kinase (212 aa).

Residues 14–192 (GTALVICAPS…AYDELRATYL (179 aa)) enclose the Guanylate kinase-like domain. 21–28 (APSGTGKT) serves as a coordination point for ATP.

This sequence belongs to the guanylate kinase family.

It localises to the cytoplasm. It carries out the reaction GMP + ATP = GDP + ADP. In terms of biological role, essential for recycling GMP and indirectly, cGMP. This Lawsonia intracellularis (strain PHE/MN1-00) protein is Guanylate kinase.